The chain runs to 227 residues: Ribonuclease 3 (227 aa).

The RNase III domain occupies 3–130 (TNAISKIIKY…LIGAIYLDGG (128 aa)). E43 provides a ligand contact to Mg(2+). D47 is a catalytic residue. Mg(2+) is bound by residues N116 and E119. E119 is a catalytic residue. A DRBM domain is found at 155-224 (DAKTILQEWA…ASLMLAKINY (70 aa)).

It belongs to the ribonuclease III family. As to quaternary structure, homodimer. Mg(2+) is required as a cofactor.

The protein localises to the cytoplasm. It carries out the reaction Endonucleolytic cleavage to 5'-phosphomonoester.. Digests double-stranded RNA. Involved in the processing of primary rRNA transcript to yield the immediate precursors to the large and small rRNAs (23S and 16S). Processes some mRNAs, and tRNAs when they are encoded in the rRNA operon. Processes pre-crRNA and tracrRNA of type II CRISPR loci if present in the organism. In Ehrlichia ruminantium (strain Gardel), this protein is Ribonuclease 3.